A 127-amino-acid chain; its full sequence is UPF0251 protein Ccel_0627 (127 aa).

The protein belongs to the UPF0251 family.

The chain is UPF0251 protein Ccel_0627 from Ruminiclostridium cellulolyticum (strain ATCC 35319 / DSM 5812 / JCM 6584 / H10) (Clostridium cellulolyticum).